We begin with the raw amino-acid sequence, 555 residues long: HERV-H_2q24.1 provirus ancestral Env polyprotein (555 aa).

A signal peptide spans 1 to 35 (MILAGRAPSNTSTLMKFYSLLLYSLLFSFPFLYHP). The Extracellular portion of the chain corresponds to 36 to 515 (LPLPSYLHHT…WALSNWMSWV (480 aa)). Asparagine 47 is a glycosylation site (N-linked (GlcNAc...) asparagine). The short motif at 64-67 (CWLC) is the CXXC element. 5 N-linked (GlcNAc...) asparagine glycosylation sites follow: asparagine 222, asparagine 265, asparagine 283, asparagine 352, and asparagine 370. Positions 388–408 (VIPLIPLMVGLGLSASTIALS) are fusion peptide. Asparagine 475 carries an N-linked (GlcNAc...) asparagine glycan. The chain crosses the membrane as a helical span at residues 516-536 (LPILSPLIPIFLLLLFGPCIF). Topologically, residues 537–555 (HLVSQFIQNRIQAITNHSI) are cytoplasmic.

The protein belongs to the gamma type-C retroviral envelope protein family. HERV class-I H env subfamily. As to quaternary structure, the surface (SU) and transmembrane (TM) proteins form a heterodimer. SU and TM are attached by noncovalent interactions or by a labile interchain disulfide bond. In terms of processing, specific enzymatic cleavages in vivo yield the mature SU and TM proteins. In terms of tissue distribution, low expression in testis.

The protein resides in the virion. It localises to the cell membrane. In terms of biological role, retroviral envelope proteins mediate receptor recognition and membrane fusion during early infection. Endogenous envelope proteins may have kept, lost or modified their original function during evolution. This endogenous envelope protein has lost its original fusogenic properties. SU mediates receptor recognition. Its function is as follows. TM anchors the envelope heterodimer to the viral membrane through one transmembrane domain. The other hydrophobic domain, called fusion peptide, mediates fusion of the viral membrane with the target cell membrane. This chain is HERV-H_2q24.1 provirus ancestral Env polyprotein, found in Homo sapiens (Human).